The following is a 369-amino-acid chain: Actin-related protein 2/3 complex subunit 1B-A (369 aa).

WD repeat units follow at residues 6-45, 50-89, 94-135, 140-179, 200-239, 242-282, and 321-364; these read FLLE…WSKI, EHNG…WKPT, RINR…WVCK, PIRS…VEER, SSCG…RVTS, TDTL…LSFG, and LHKN…SAMK.

Belongs to the WD repeat ARPC1 family. Component of the Arp2/3 complex composed of actr2/arp2, actr3/arp3, arpc1 (arpc1a or arpc1b), arpc2, arpc3, arpc4 and arpc5.

Its subcellular location is the cytoplasm. The protein resides in the cytoskeleton. It localises to the nucleus. Its function is as follows. Component of the Arp2/3 complex, a multiprotein complex that mediates actin polymerization upon stimulation by nucleation-promoting factor (NPF). The Arp2/3 complex mediates the formation of branched actin networks in the cytoplasm, providing the force for cell motility. In addition to its role in the cytoplasmic cytoskeleton, the Arp2/3 complex also promotes actin polymerization in the nucleus, thereby regulating gene transcription and repair of damaged DNA. The Arp2/3 complex promotes homologous recombination (HR) repair in response to DNA damage by promoting nuclear actin polymerization, leading to drive motility of double-strand breaks (DSBs). This Xenopus laevis (African clawed frog) protein is Actin-related protein 2/3 complex subunit 1B-A (arpc1b-a).